Reading from the N-terminus, the 112-residue chain is Large ribosomal subunit protein bL20c (112 aa).

Belongs to the bacterial ribosomal protein bL20 family.

The protein localises to the plastid. The protein resides in the chloroplast. Its function is as follows. Binds directly to 23S ribosomal RNA and is necessary for the in vitro assembly process of the 50S ribosomal subunit. It is not involved in the protein synthesizing functions of that subunit. The chain is Large ribosomal subunit protein bL20c (rpl20) from Anthoceros angustus (Hornwort).